The primary structure comprises 227 residues: N-acetyltransferase 8B (227 aa).

The Cytoplasmic segment spans residues methionine 1–threonine 42. A helical; Signal-anchor for type II membrane protein membrane pass occupies residues leucine 43–alanine 63. An N-acetyltransferase domain is found at isoleucine 61–histidine 214. Over leucine 64–leucine 227 the chain is Lumenal. The residue at position 99 (lysine 99) is an N6-acetyllysine.

It belongs to the NAT8 family. In terms of processing, acetylation on Lys-99 modulates enzymatic activity.

The protein resides in the endoplasmic reticulum-Golgi intermediate compartment membrane. The protein localises to the endoplasmic reticulum membrane. The catalysed reaction is L-lysyl-[protein] + acetyl-CoA = N(6)-acetyl-L-lysyl-[protein] + CoA + H(+). With respect to regulation, allosterically regulated by acetylation at residue Lys-99. Functionally, endoplasmic reticulum (ER)-membrane-bound lysine N-acetyltransferase catalyzing the N6-acetylation of lysine residues in the lumen of the ER in various proteins, including PROM1 and BACE1, using acetyl-CoA as acetyl donor. Thereby, may regulate apoptosis through the acetylation and the regulation of the expression of PROM1. Acetylates and stabilizes BACE1 immature protein, leading to increased steady-state levels in neurons. By acting on BACE1 expression, may regulate amyloid beta-peptide formation. N(6)-lysine acetylation in ER maintains protein homeostasis and regulates reticulophagy. The chain is N-acetyltransferase 8B from Homo sapiens (Human).